We begin with the raw amino-acid sequence, 95 residues long: Small ribosomal subunit protein uS19 (95 aa).

A disordered region spans residues 76 to 95 (PTRRFGGHADKKAATKGQVR).

The protein belongs to the universal ribosomal protein uS19 family.

Functionally, protein S19 forms a complex with S13 that binds strongly to the 16S ribosomal RNA. The polypeptide is Small ribosomal subunit protein uS19 (Pseudothermotoga lettingae (strain ATCC BAA-301 / DSM 14385 / NBRC 107922 / TMO) (Thermotoga lettingae)).